The primary structure comprises 290 residues: 3-keto-disaccharide hydrolase (290 aa).

Residues 1 to 19 (MKKVFYPLACCLAAGVLVS) form the signal peptide. Cysteine 20 is lipidated: N-palmitoyl cysteine. Cysteine 20 carries S-diacylglycerol cysteine lipidation.

It localises to the cell membrane. It catalyses the reaction 3-dehydro-alpha,alpha-trehalose + H2O = 3-dehydro-D-glucose + D-glucose. In terms of biological role, 3-keto-disaccharide hydrolase that preferentially hydrolyzes 3-keto-trehalose (3-dehydro-alpha,alpha-trehalose). Important for disaccharide utilization in the human gut. Also shows hydrolysis activity with the glucosinolates glucoraphanin or glucobrassicin, but with much lower efficiency. This chain is 3-keto-disaccharide hydrolase, found in Bacteroides thetaiotaomicron (strain ATCC 29148 / DSM 2079 / JCM 5827 / CCUG 10774 / NCTC 10582 / VPI-5482 / E50).